Here is a 122-residue protein sequence, read N- to C-terminus: Large ribosomal subunit protein bL12 (122 aa).

The protein belongs to the bacterial ribosomal protein bL12 family. As to quaternary structure, homodimer. Part of the ribosomal stalk of the 50S ribosomal subunit. Forms a multimeric L10(L12)X complex, where L10 forms an elongated spine to which 2 to 4 L12 dimers bind in a sequential fashion. Binds GTP-bound translation factors.

Functionally, forms part of the ribosomal stalk which helps the ribosome interact with GTP-bound translation factors. Is thus essential for accurate translation. In Buchnera aphidicola subsp. Acyrthosiphon pisum (strain Tuc7), this protein is Large ribosomal subunit protein bL12.